The primary structure comprises 282 residues: ATP synthase gamma chain (282 aa).

Belongs to the ATPase gamma chain family. In terms of assembly, F-type ATPases have 2 components, CF(1) - the catalytic core - and CF(0) - the membrane proton channel. CF(1) has five subunits: alpha(3), beta(3), gamma(1), delta(1), epsilon(1). CF(0) has three main subunits: a, b and c.

The protein resides in the cell inner membrane. Functionally, produces ATP from ADP in the presence of a proton gradient across the membrane. The gamma chain is believed to be important in regulating ATPase activity and the flow of protons through the CF(0) complex. This Fusobacterium nucleatum subsp. nucleatum (strain ATCC 25586 / DSM 15643 / BCRC 10681 / CIP 101130 / JCM 8532 / KCTC 2640 / LMG 13131 / VPI 4355) protein is ATP synthase gamma chain.